Reading from the N-terminus, the 561-residue chain is Glutamine--tRNA ligase (561 aa).

The 'HIGH' region motif lies at 34–44; the sequence is PEPNGYLHIGH. Residues 35 to 37 and 41 to 47 each bind ATP; these read EPN and HIGHAKS. L-glutamine contacts are provided by D67 and Y212. ATP contacts are provided by residues T231, 261-262, and 269-271; these read RL and MSK. The short motif at 268–272 is the 'KMSKS' region element; sequence VMSKR.

This sequence belongs to the class-I aminoacyl-tRNA synthetase family. In terms of assembly, monomer.

It localises to the cytoplasm. It catalyses the reaction tRNA(Gln) + L-glutamine + ATP = L-glutaminyl-tRNA(Gln) + AMP + diphosphate. This is Glutamine--tRNA ligase from Idiomarina loihiensis (strain ATCC BAA-735 / DSM 15497 / L2-TR).